The sequence spans 212 residues: Thymidylate kinase (212 aa).

10–17 contributes to the ATP binding site; sequence GLEGAGKT.

Belongs to the thymidylate kinase family.

The enzyme catalyses dTMP + ATP = dTDP + ADP. In terms of biological role, phosphorylation of dTMP to form dTDP in both de novo and salvage pathways of dTTP synthesis. This Yersinia pseudotuberculosis serotype O:1b (strain IP 31758) protein is Thymidylate kinase.